A 391-amino-acid polypeptide reads, in one-letter code: Elongation factor Tu (391 aa).

The 192-residue stretch at 10–201 (KPHVNIGTIG…AVDSYIPTPE (192 aa)) folds into the tr-type G domain. The interval 19–26 (GHVDHGKT) is G1. Residue 19 to 26 (GHVDHGKT) coordinates GTP. T26 contributes to the Mg(2+) binding site. The G2 stretch occupies residues 55-59 (GITIS). Residues 76–79 (DCPG) form a G3 region. GTP is bound by residues 76–80 (DCPGH) and 131–134 (NKCD). The interval 131 to 134 (NKCD) is G4. The tract at residues 169-171 (SAL) is G5.

The protein belongs to the TRAFAC class translation factor GTPase superfamily. Classic translation factor GTPase family. EF-Tu/EF-1A subfamily. As to quaternary structure, monomer.

It is found in the cytoplasm. It catalyses the reaction GTP + H2O = GDP + phosphate + H(+). In terms of biological role, GTP hydrolase that promotes the GTP-dependent binding of aminoacyl-tRNA to the A-site of ribosomes during protein biosynthesis. This chain is Elongation factor Tu, found in Brucella canis (strain ATCC 23365 / NCTC 10854 / RM-666).